A 159-amino-acid polypeptide reads, in one-letter code: Cytochrome c-type biogenesis CcmH-like mitochondrial protein (159 aa).

The Mitochondrial intermembrane segment spans residues 1–82; the sequence is MEKTDEERKK…ETVLYAPKFD (82 aa). Heme-binding residues include cysteine 27 and cysteine 30. A helical membrane pass occupies residues 83 to 105; the sequence is LQTAALWLTPVIIAGGTAAGIVY. Over 106–159 the chain is Mitochondrial matrix; the sequence is QKHRLRKNVDIMALNLIRGVPLTPKERVTILDVLIPPSPPPQGVVSRLRRWLNR.

Belongs to the CcmH/CycL/Ccl2/NrfF family. In terms of assembly, interacts (via N-terminus) with CYTC-1. Interacts with CCMFN1 and CCMFN2.

It localises to the mitochondrion inner membrane. Its function is as follows. Plays a central role in mitochondrial cytochrome c maturation. Probable component of a heme lyase complex involved in the reduction of apocytochrome c. Forms a complex with CCMF proteins (CCMFC, CCMFN1 and CCMFN2) that performs the assembly of heme with c-type apocytochromes in mitochondria. The polypeptide is Cytochrome c-type biogenesis CcmH-like mitochondrial protein (Arabidopsis thaliana (Mouse-ear cress)).